A 110-amino-acid chain; its full sequence is Large ribosomal subunit protein uL24 (110 aa).

It belongs to the universal ribosomal protein uL24 family. Part of the 50S ribosomal subunit.

Functionally, one of two assembly initiator proteins, it binds directly to the 5'-end of the 23S rRNA, where it nucleates assembly of the 50S subunit. Its function is as follows. One of the proteins that surrounds the polypeptide exit tunnel on the outside of the subunit. This Chloroflexus aggregans (strain MD-66 / DSM 9485) protein is Large ribosomal subunit protein uL24.